The primary structure comprises 280 residues: Formyltetrahydrofolate deformylase (280 aa).

Positions valine 8–arginine 86 constitute an ACT domain. Residue aspartate 225 is part of the active site.

Belongs to the PurU family.

The catalysed reaction is (6R)-10-formyltetrahydrofolate + H2O = (6S)-5,6,7,8-tetrahydrofolate + formate + H(+). It functions in the pathway purine metabolism; IMP biosynthesis via de novo pathway; formate from 10-formyl-5,6,7,8-tetrahydrofolate: step 1/1. In terms of biological role, catalyzes the hydrolysis of 10-formyltetrahydrofolate (formyl-FH4) to formate and tetrahydrofolate (FH4). This Escherichia coli O6:H1 (strain CFT073 / ATCC 700928 / UPEC) protein is Formyltetrahydrofolate deformylase.